Here is a 248-residue protein sequence, read N- to C-terminus: Pulmonary surfactant-associated protein A (248 aa).

An N-terminal signal peptide occupies residues 1-20; that stretch reads MSLCSLAFTLFLTVVAGIKC. The 73-residue stretch at 28–100 folds into the Collagen-like domain; it reads GSPGIPGAPG…PGERGLPGFP (73 aa). Residues Pro-30, Pro-33, Pro-36, Pro-42, Pro-54, Pro-57, Pro-63, Pro-67, Pro-70, and Pro-76 each carry the 4-hydroxyproline modification. The tract at residues 31–99 is disordered; it reads GIPGAPGNHG…EPGERGLPGF (69 aa). A compositionally biased stretch (basic and acidic residues) spans 42–51; it reads PGRDGRDGVK. Positions 54–65 are enriched in pro residues; sequence PGPPGPMGPPGG. Low complexity predominate over residues 69 to 82; the sequence is LPGRDGLPGAPGAP. Residues 84–93 are compositionally biased toward basic and acidic residues; the sequence is ERGDKGEPGE. The region spanning 133–248 is the C-type lectin domain; that stretch reads SVGDKVFSTN…LQYRLAVCEF (116 aa). Intrachain disulfides connect Cys-155/Cys-246 and Cys-224/Cys-238. N-linked (GlcNAc...) asparagine glycosylation occurs at Asn-207. The Ca(2+) site is built by Glu-215, Arg-217, Asn-234, and Asp-235.

Belongs to the SFTPA family. Oligomeric complex of 6 set of homotrimers.

The protein localises to the secreted. The protein resides in the extracellular space. It localises to the extracellular matrix. Its subcellular location is the surface film. Its function is as follows. In presence of calcium ions, it binds to surfactant phospholipids and contributes to lower the surface tension at the air-liquid interface in the alveoli of the mammalian lung and is essential for normal respiration. Enhances the expression of MYO18A/SP-R210 on alveolar macrophages. This chain is Pulmonary surfactant-associated protein A (Sftpa1), found in Rattus norvegicus (Rat).